We begin with the raw amino-acid sequence, 373 residues long: tRNA-specific 2-thiouridylase MnmA (373 aa).

Residues 18–25 and leucine 44 contribute to the ATP site; that span reads AMSGGVDS. Cysteine 117 (nucleophile) is an active-site residue. Cysteine 117 and cysteine 214 are disulfide-bonded. Glycine 141 contacts ATP. The segment at 163–165 is interaction with tRNA; that stretch reads RDQ. The Cysteine persulfide intermediate role is filled by cysteine 214.

This sequence belongs to the MnmA/TRMU family.

The protein resides in the cytoplasm. It carries out the reaction S-sulfanyl-L-cysteinyl-[protein] + uridine(34) in tRNA + AH2 + ATP = 2-thiouridine(34) in tRNA + L-cysteinyl-[protein] + A + AMP + diphosphate + H(+). Its function is as follows. Catalyzes the 2-thiolation of uridine at the wobble position (U34) of tRNA, leading to the formation of s(2)U34. The sequence is that of tRNA-specific 2-thiouridylase MnmA from Paramagnetospirillum magneticum (strain ATCC 700264 / AMB-1) (Magnetospirillum magneticum).